The sequence spans 384 residues: S-adenosylmethionine synthase (384 aa).

His15 provides a ligand contact to ATP. A Mg(2+)-binding site is contributed by Asp17. A K(+)-binding site is contributed by Glu43. 2 residues coordinate L-methionine: Glu56 and Gln99. The flexible loop stretch occupies residues 99-109 (QSPDINQGVDR). ATP is bound by residues 164–166 (DAK), 230–231 (RF), Asp239, 245–246 (RK), Ala262, and Lys266. Asp239 contacts L-methionine. Lys270 contributes to the L-methionine binding site.

Belongs to the AdoMet synthase family. As to quaternary structure, homotetramer; dimer of dimers. The cofactor is Mg(2+). K(+) is required as a cofactor.

The protein localises to the cytoplasm. It catalyses the reaction L-methionine + ATP + H2O = S-adenosyl-L-methionine + phosphate + diphosphate. It functions in the pathway amino-acid biosynthesis; S-adenosyl-L-methionine biosynthesis; S-adenosyl-L-methionine from L-methionine: step 1/1. In terms of biological role, catalyzes the formation of S-adenosylmethionine (AdoMet) from methionine and ATP. The overall synthetic reaction is composed of two sequential steps, AdoMet formation and the subsequent tripolyphosphate hydrolysis which occurs prior to release of AdoMet from the enzyme. This is S-adenosylmethionine synthase from Shigella boydii serotype 18 (strain CDC 3083-94 / BS512).